Here is a 192-residue protein sequence, read N- to C-terminus: MTKDVVIEHGESSKAPLVPAPVAAGVGRAVSIADVFLRFLSIVATIASAISMGTTNETLPFFTQFIQFEAKYSDLPSFTFFVAANAVVCTYLVLSIPLSIVHIIRPRARYSRLILVFFDAVMLALLTAGASAAAAIVYLAHKGNVRANWFAICQQFDSFCERISGSLIGSFAAMVLLIVLIFLSAFALARRH.

Over 1–29 (MTKDVVIEHGESSKAPLVPAPVAAGVGRA) the chain is Cytoplasmic. The chain crosses the membrane as a helical span at residues 30–50 (VSIADVFLRFLSIVATIASAI). Over 51-79 (SMGTTNETLPFFTQFIQFEAKYSDLPSFT) the chain is Extracellular. Asn56 is a glycosylation site (N-linked (GlcNAc...) asparagine). The chain crosses the membrane as a helical span at residues 80–100 (FFVAANAVVCTYLVLSIPLSI). The Cytoplasmic portion of the chain corresponds to 101–112 (VHIIRPRARYSR). The chain crosses the membrane as a helical span at residues 113–133 (LILVFFDAVMLALLTAGASAA). Residues 134–166 (AAIVYLAHKGNVRANWFAICQQFDSFCERISGS) lie on the Extracellular side of the membrane. Residues 167-187 (LIGSFAAMVLLIVLIFLSAFA) traverse the membrane as a helical segment. Residues 188–192 (LARRH) are Cytoplasmic-facing.

Belongs to the Casparian strip membrane proteins (CASP) family. As to quaternary structure, homodimer and heterodimers.

It localises to the cell membrane. Its function is as follows. Regulates membrane-cell wall junctions and localized cell wall deposition. Required for establishment of the Casparian strip membrane domain (CSD) and the subsequent formation of Casparian strips, a cell wall modification of the root endodermis that determines an apoplastic barrier between the intraorganismal apoplasm and the extraorganismal apoplasm and prevents lateral diffusion. This is Casparian strip membrane protein 4 from Sorghum bicolor (Sorghum).